The following is a 425-amino-acid chain: MSTIIDIHAREILDSRGNPTVEVDVTLESGAFGRAAVPSGASTGAHEAVEKRDGDKSRYMGKGVLEAVAAVNGEIAEMLVGFDATEQVGIDRTMIEMDGTPNKGRLGANAILGVSLAVAKAAAEFTNQPLFRYVGGSSARVLPVPMMNIINGGEHADNPIDIQEFMIMPVAAQNVREAIRMGSEVFHTLKKELAAGGFNTGIGDEGGFAPNISSTREALDYILRSIEKAGYKPGEDIYLALDCASTEYFKGGKYEMKGEGKSLTSAENVDYLAALCADYPIISIEDGCAEDDWEGWKLLTDKLGAKVQLVGDDLFVTNPKRLEQGIKAGVANSMLVKVNQIGSLTETLMAVDMAHRARYTNVMSHRSGETEDATIADLAVATNCGQIKTGSLSRSDRLAKYNQLIRIEEMLGEVAEYAGRSILKV.

Position 163 (Gln163) interacts with (2R)-2-phosphoglycerate. Glu205 (proton donor) is an active-site residue. Positions 242, 285, and 312 each coordinate Mg(2+). Residues Lys337, Arg366, Ser367, and Lys388 each contribute to the (2R)-2-phosphoglycerate site. Lys337 acts as the Proton acceptor in catalysis.

Belongs to the enolase family. It depends on Mg(2+) as a cofactor.

Its subcellular location is the cytoplasm. The protein resides in the secreted. It is found in the cell surface. It catalyses the reaction (2R)-2-phosphoglycerate = phosphoenolpyruvate + H2O. Its pathway is carbohydrate degradation; glycolysis; pyruvate from D-glyceraldehyde 3-phosphate: step 4/5. In terms of biological role, catalyzes the reversible conversion of 2-phosphoglycerate (2-PG) into phosphoenolpyruvate (PEP). It is essential for the degradation of carbohydrates via glycolysis. This Cereibacter sphaeroides (strain ATCC 17029 / ATH 2.4.9) (Rhodobacter sphaeroides) protein is Enolase.